Reading from the N-terminus, the 367-residue chain is Biotin synthase (367 aa).

The Radical SAM core domain occupies 73–308; that stretch reads CCGNTVDLCS…EQIIRYAGGR (236 aa). Residues Cys-91, Cys-95, and Cys-98 each coordinate [4Fe-4S] cluster. Residues Cys-136, Cys-173, Cys-233, and Arg-303 each contribute to the [2Fe-2S] cluster site.

The protein belongs to the radical SAM superfamily. Biotin synthase family. Homodimer. [4Fe-4S] cluster is required as a cofactor. [2Fe-2S] cluster serves as cofactor.

The catalysed reaction is (4R,5S)-dethiobiotin + (sulfur carrier)-SH + 2 reduced [2Fe-2S]-[ferredoxin] + 2 S-adenosyl-L-methionine = (sulfur carrier)-H + biotin + 2 5'-deoxyadenosine + 2 L-methionine + 2 oxidized [2Fe-2S]-[ferredoxin]. Its pathway is cofactor biosynthesis; biotin biosynthesis; biotin from 7,8-diaminononanoate: step 2/2. Its function is as follows. Catalyzes the conversion of dethiobiotin (DTB) to biotin by the insertion of a sulfur atom into dethiobiotin via a radical-based mechanism. The polypeptide is Biotin synthase (Picosynechococcus sp. (strain ATCC 27264 / PCC 7002 / PR-6) (Agmenellum quadruplicatum)).